A 596-amino-acid chain; its full sequence is Linalool synthase TPS3, chloroplastic (596 aa).

The N-terminal 39 residues, 1-39 (MISSLNPLFTTHRSGVIAQQFFASSAAASINSVSSLKIA), are a transit peptide targeting the chloroplast. Arg308, Asp345, Asp349, Arg486, and Asn489 together coordinate (2E)-geranyl diphosphate. The Mg(2+) site is built by Asp345 and Asp349. A DDXXD motif motif is present at residues 345–349 (DDIYD). The Mg(2+) site is built by Asn489, Thr493, and Ser497.

This sequence belongs to the terpene synthase family. Tpsb subfamily. In terms of assembly, monomer. It depends on Mg(2+) as a cofactor. Mn(2+) serves as cofactor. Expressed in flowers and fruits.

It is found in the plastid. It localises to the chloroplast. The enzyme catalyses (2E)-geranyl diphosphate = beta-myrcene + diphosphate. It carries out the reaction (2E)-geranyl diphosphate + H2O = linalool + diphosphate. It catalyses the reaction (2E)-geranyl diphosphate = (Z)-beta-ocimene + diphosphate. The catalysed reaction is (2E)-geranyl diphosphate = (E)-beta-ocimene + diphosphate. Its pathway is secondary metabolite biosynthesis; terpenoid biosynthesis. Its function is as follows. Monoterpene synthase (mono-TPS) involved in the biosynthesis of monoterpenes natural products, constituent of coffee beverage aroma. Catalyzes the conversion of (2E)-geranyl diphosphate (GPP) into linalool and beta-myrcene, and, as minor products, cis-ocimene and trans-ocimene. Not able to use geranylgeranyl pyrophosphate (GGPP) and farnesyl pyrophosphate (FPP) as substrates. The protein is Linalool synthase TPS3, chloroplastic of Coffea arabica (Arabian coffee).